The chain runs to 265 residues: Phosphatidylglycerol--prolipoprotein diacylglyceryl transferase (265 aa).

The next 7 membrane-spanning stretches (helical) occupy residues 17–37, 57–77, 89–109, 127–147, 176–196, 201–218, and 233–253; these read VAVR…VVLG, LLLY…VLFY, ILAV…VLVA, FIAP…FING, QLYQ…VFAA, LRAV…LRFV, and LVPG…VGLA. Residue arginine 140 coordinates a 1,2-diacyl-sn-glycero-3-phospho-(1'-sn-glycerol).

Belongs to the Lgt family.

It localises to the cell inner membrane. The catalysed reaction is L-cysteinyl-[prolipoprotein] + a 1,2-diacyl-sn-glycero-3-phospho-(1'-sn-glycerol) = an S-1,2-diacyl-sn-glyceryl-L-cysteinyl-[prolipoprotein] + sn-glycerol 1-phosphate + H(+). It participates in protein modification; lipoprotein biosynthesis (diacylglyceryl transfer). Catalyzes the transfer of the diacylglyceryl group from phosphatidylglycerol to the sulfhydryl group of the N-terminal cysteine of a prolipoprotein, the first step in the formation of mature lipoproteins. The chain is Phosphatidylglycerol--prolipoprotein diacylglyceryl transferase from Azoarcus sp. (strain BH72).